The chain runs to 338 residues: MSWELLLWLLALCALILPLVQLLRFLRADADLTLLWAEWQGRRPEWELTDMVVWVTGASSGIGEELAFQLSKLGVSLVLSARRAQELERVKRRCLENGNLKEKDILVLPLDLTDTSSHEAATKAVLQEFGKIDILVNNGGRSQRSLVLETNLDVFKELINLNYIGTVSLTKCVLPHMIERKQGKIVTVNSIAGIASVSLSSGYCASKHALRGFFNALHSELGQYPGITFCNVYPGPVQSDIVKNAFTEEVTKSMRNNIDQSYKMPTSRCVRLMLISMANDLKEVWISDHPVLLGAYIWQYMPTWAAWLNCKLGKERIQNFKNNLDPDLPYKFLKAKKD.

A signal peptide spans 1 to 28 (MSWELLLWLLALCALILPLVQLLRFLRA). Residues S60 and I62 each contribute to the NAD(+) site. Position 190 (S190) interacts with substrate. NAD(+)-binding residues include Y203, K207, and S239. The Proton acceptor role is filled by Y203.

The protein belongs to the short-chain dehydrogenases/reductases (SDR) family.

It localises to the endoplasmic reticulum membrane. The catalysed reaction is all-trans-retinol + NADP(+) = all-trans-retinal + NADPH + H(+). It carries out the reaction 5alpha-androstane-3alpha,17beta-diol + NADP(+) = 17beta-hydroxy-5alpha-androstan-3-one + NADPH + H(+). Its function is as follows. NADPH-dependent oxidoreductase which catalyzes the reduction of a variety of compounds bearing carbonyl groups including steroids, retinoids and xenobiotics. Catalyzes the reduction/inactivation of 5alpha-dihydrotestosterone to 3alpha-androstanediol, with a possible role in the modulation of androgen receptor function. Involved in the reduction of all-trans-retinal to all-trans-retinol. Converts cortisone to 20beta-dihydrocortisone in vitro, although the physiological relevance of this activity is questionable. Reduces exogenous compounds such as quinones (1,2-naphtoquinone, 9,10-phenantrenequinone and benzoquinone) and other xenobiotics (alpha-diketones) in vitro, suggesting a role in the biotransformation of xenobiotics with carbonyl group. A dehydrogenase activity has not been detected so far. May play a role as tumor suppressor. In Mus musculus (Mouse), this protein is Dehydrogenase/reductase SDR family member 7.